Consider the following 233-residue polypeptide: Leucyl/phenylalanyl-tRNA--protein transferase (233 aa).

Belongs to the L/F-transferase family.

The protein resides in the cytoplasm. The catalysed reaction is N-terminal L-lysyl-[protein] + L-leucyl-tRNA(Leu) = N-terminal L-leucyl-L-lysyl-[protein] + tRNA(Leu) + H(+). It catalyses the reaction N-terminal L-arginyl-[protein] + L-leucyl-tRNA(Leu) = N-terminal L-leucyl-L-arginyl-[protein] + tRNA(Leu) + H(+). The enzyme catalyses L-phenylalanyl-tRNA(Phe) + an N-terminal L-alpha-aminoacyl-[protein] = an N-terminal L-phenylalanyl-L-alpha-aminoacyl-[protein] + tRNA(Phe). Its function is as follows. Functions in the N-end rule pathway of protein degradation where it conjugates Leu, Phe and, less efficiently, Met from aminoacyl-tRNAs to the N-termini of proteins containing an N-terminal arginine or lysine. The polypeptide is Leucyl/phenylalanyl-tRNA--protein transferase (Anaeromyxobacter dehalogenans (strain 2CP-1 / ATCC BAA-258)).